A 254-amino-acid chain; its full sequence is 2-dehydro-3-deoxy-D-gluconate 5-dehydrogenase (254 aa).

16–40 (LVTGPGTGIGQGIAKALAGAGADII) contributes to the NAD(+) binding site. A substrate-binding site is contributed by serine 146. Tyrosine 159 acts as the Proton acceptor in catalysis.

Belongs to the short-chain dehydrogenases/reductases (SDR) family.

It carries out the reaction 2-dehydro-3-deoxy-D-gluconate + NAD(+) = 3-deoxy-D-glycero-2,5-hexodiulosonate + NADH + H(+). It participates in glycan metabolism; pectin degradation; 2-dehydro-3-deoxy-D-gluconate from pectin: step 5/5. Functionally, catalyzes the reduction of 2,5-diketo-3-deoxygluconate (DKII or 4,6-dihydroxy-2,5-dioxohexanoate) into 2-keto-3-deoxygluconate (KDG or 2-dehydro-3-deoxygluconate) with a concomitant oxidation of NADH. In Bacillus subtilis (strain 168), this protein is 2-dehydro-3-deoxy-D-gluconate 5-dehydrogenase (kduD).